Reading from the N-terminus, the 357-residue chain is Alanine racemase (357 aa).

The active-site Proton acceptor; specific for D-alanine is Lys35. Lys35 carries the N6-(pyridoxal phosphate)lysine modification. Arg131 is a binding site for substrate. Tyr256 acts as the Proton acceptor; specific for L-alanine in catalysis. Residue Met304 coordinates substrate.

The protein belongs to the alanine racemase family. The cofactor is pyridoxal 5'-phosphate.

The enzyme catalyses L-alanine = D-alanine. The protein operates within amino-acid biosynthesis; D-alanine biosynthesis; D-alanine from L-alanine: step 1/1. Its function is as follows. Catalyzes the interconversion of L-alanine and D-alanine. May also act on other amino acids. In Legionella pneumophila (strain Lens), this protein is Alanine racemase (alr).